The chain runs to 154 residues: Transcriptional repressor NrdR (154 aa).

The disordered stretch occupies residues 1–22 (MRCPFCGNDDTQVKDSRPTEDN). A zinc finger lies at 3–34 (CPFCGNDDTQVKDSRPTEDNSAIRRRRFCPAC). Basic and acidic residues predominate over residues 11–22 (TQVKDSRPTEDN). The ATP-cone domain maps to 49 to 139 (LTVVKSGGSR…VYKDFREVTD (91 aa)).

Belongs to the NrdR family. The cofactor is Zn(2+).

Its function is as follows. Negatively regulates transcription of bacterial ribonucleotide reductase nrd genes and operons by binding to NrdR-boxes. The chain is Transcriptional repressor NrdR from Rhodospirillum centenum (strain ATCC 51521 / SW).